The following is a 78-amino-acid chain: U-scoloptoxin(13)-Er1a (78 aa).

The signal sequence occupies residues 1-24 (MFPSWSTTFVLCMGLCSLMNGALA).

This sequence belongs to the scoloptoxin-13 family. In terms of processing, contains 4 disulfide bonds. Expressed by the venom gland.

It localises to the secreted. This is U-scoloptoxin(13)-Er1a from Ethmostigmus rubripes (Giant centipede).